A 126-amino-acid chain; its full sequence is MARVSGVDIPREKRVEIALTYVFGIGRTLSQQTLAATGVDPNTRVRDLSEEQLVAIREYVDNNIKTEGDLRREVQADIRRKVEIGTYQGLRHRRGLPVRGQRTSTNARTRKGPRRAIAGKKKPGKK.

Residues Arg-91–Lys-126 form a disordered region. Residues Arg-108 to Lys-126 show a composition bias toward basic residues.

Belongs to the universal ribosomal protein uS13 family. In terms of assembly, part of the 30S ribosomal subunit. Forms a loose heterodimer with protein S19. Forms two bridges to the 50S subunit in the 70S ribosome.

Located at the top of the head of the 30S subunit, it contacts several helices of the 16S rRNA. In the 70S ribosome it contacts the 23S rRNA (bridge B1a) and protein L5 of the 50S subunit (bridge B1b), connecting the 2 subunits; these bridges are implicated in subunit movement. Contacts the tRNAs in the A and P-sites. This chain is Small ribosomal subunit protein uS13, found in Streptomyces coelicolor (strain ATCC BAA-471 / A3(2) / M145).